The following is a 121-amino-acid chain: Immunoglobulin kappa variable 2-40 (121 aa).

Positions 1–19 are cleaved as a signal peptide; that stretch reads MRLPAQLLGLLMLWVPGSS. Positions 20 to 121 constitute an Ig-like domain; that stretch reads EDIVMTQTPL…YYCMQRIEFP (102 aa). The interval 21–43 is framework-1; the sequence is DIVMTQTPLSLPVTPGEPASISC. Residues Cys-43 and Cys-114 are joined by a disulfide bond. The tract at residues 44-60 is complementarity-determining-1; that stretch reads RSSQSLLDSDDGNTYLD. The tract at residues 61–75 is framework-2; sequence WYLQKPGQSPQLLIY. Residues 76-82 are complementarity-determining-2; the sequence is TLSYRAS. The segment at 83–114 is framework-3; it reads GVPDRFSGSGSGTDFTLKISRVEAEDVGVYYC. The segment at 115-121 is complementarity-determining-3; the sequence is MQRIEFP.

In terms of assembly, immunoglobulins are composed of two identical heavy chains and two identical light chains; disulfide-linked.

It is found in the secreted. Its subcellular location is the cell membrane. In terms of biological role, v region of the variable domain of immunoglobulin light chains that participates in the antigen recognition. Immunoglobulins, also known as antibodies, are membrane-bound or secreted glycoproteins produced by B lymphocytes. In the recognition phase of humoral immunity, the membrane-bound immunoglobulins serve as receptors which, upon binding of a specific antigen, trigger the clonal expansion and differentiation of B lymphocytes into immunoglobulins-secreting plasma cells. Secreted immunoglobulins mediate the effector phase of humoral immunity, which results in the elimination of bound antigens. The antigen binding site is formed by the variable domain of one heavy chain, together with that of its associated light chain. Thus, each immunoglobulin has two antigen binding sites with remarkable affinity for a particular antigen. The variable domains are assembled by a process called V-(D)-J rearrangement and can then be subjected to somatic hypermutations which, after exposure to antigen and selection, allow affinity maturation for a particular antigen. The chain is Immunoglobulin kappa variable 2-40 from Homo sapiens (Human).